Reading from the N-terminus, the 105-residue chain is Pyrimidine/purine nucleoside phosphorylase (105 aa).

It belongs to the nucleoside phosphorylase PpnP family.

The enzyme catalyses a purine D-ribonucleoside + phosphate = a purine nucleobase + alpha-D-ribose 1-phosphate. It carries out the reaction adenosine + phosphate = alpha-D-ribose 1-phosphate + adenine. The catalysed reaction is cytidine + phosphate = cytosine + alpha-D-ribose 1-phosphate. It catalyses the reaction guanosine + phosphate = alpha-D-ribose 1-phosphate + guanine. The enzyme catalyses inosine + phosphate = alpha-D-ribose 1-phosphate + hypoxanthine. It carries out the reaction thymidine + phosphate = 2-deoxy-alpha-D-ribose 1-phosphate + thymine. The catalysed reaction is uridine + phosphate = alpha-D-ribose 1-phosphate + uracil. It catalyses the reaction xanthosine + phosphate = alpha-D-ribose 1-phosphate + xanthine. Its function is as follows. Catalyzes the phosphorolysis of diverse nucleosides, yielding D-ribose 1-phosphate and the respective free bases. Can use uridine, adenosine, guanosine, cytidine, thymidine, inosine and xanthosine as substrates. Also catalyzes the reverse reactions. The sequence is that of Pyrimidine/purine nucleoside phosphorylase from Acidovorax ebreus (strain TPSY) (Diaphorobacter sp. (strain TPSY)).